The primary structure comprises 839 residues: Taste receptor type 1 member 2 (839 aa).

The signal sequence occupies residues 1-19 (MGPRATTICSLFFLLWVLA). Residues 20 to 566 (EPAENSDFYL…AFLEWHEAPT (547 aa)) lie on the Extracellular side of the membrane. N-linked (GlcNAc...) asparagine glycosylation is found at Asn84, Asn248, Asn292, Asn312, Asn368, Asn428, Asn487, and Asn527. The helical transmembrane segment at 567–587 (IAVALLAALGFLSTLAILVIF) threads the bilayer. At 588 to 602 (WRHFQTPMVRSAGGP) the chain is on the cytoplasmic side. The chain crosses the membrane as a helical span at residues 603 to 623 (MCFLMLTLLLVAYMVVPVYVG). Over 624 to 635 (PPKVSTCLCRQA) the chain is Extracellular. Residues 636-656 (LFPLCFTICISCIAVRSFQII) form a helical membrane-spanning segment. Residues 657–681 (CAFKMASRFPRAYSYWVRYQGPYVS) lie on the Cytoplasmic side of the membrane. Residues 682–702 (MAFITVLKMVIVVIGMLATGL) traverse the membrane as a helical segment. Residues 703-727 (NPTTRTDPDDPKIMIVSCNPNYRNS) lie on the Extracellular side of the membrane. Residues 728–748 (LLFNTSLDLLLSVVGFSFANM) form a helical membrane-spanning segment. The Cytoplasmic segment spans residues 749–760 (GKELPTNYNEAK). The helical transmembrane segment at 761-781 (FITLSMTFYFTSSISLCTFMS) threads the bilayer. At 782–784 (AYS) the chain is on the extracellular side. A helical transmembrane segment spans residues 785 to 805 (GVLVTIVDLLVTVLNLLAISL). The Cytoplasmic segment spans residues 806-839 (GYFGPKCYMILFYPERNTPAYFNSVIQGYTMTRD).

This sequence belongs to the G-protein coupled receptor 3 family. TAS1R subfamily. Forms heterodimers with TAS1R3.

It is found in the cell membrane. In terms of biological role, putative taste receptor. TAS1R2/TAS1R3 recognizes diverse natural and synthetic sweeteners. The sequence is that of Taste receptor type 1 member 2 (TAS1R2) from Pongo pygmaeus (Bornean orangutan).